The chain runs to 238 residues: Dolichyldiphosphatase 1 (238 aa).

4 consecutive transmembrane segments (helical) span residues 33–53, 100–120, 130–150, and 162–182; these read LAYLSLSPIFVVVGFLTLIIF, PSSHSQFMWFFSVYSFLFLYL, FLDLLWRHVLSLGLLTAAFLV, and WSQVFYGGVAGSLMAVAWFII.

The protein belongs to the dolichyldiphosphatase family. As to expression, widely expressed with highest levels in brain, kidney, lung and intestine.

The protein resides in the endoplasmic reticulum membrane. The catalysed reaction is a di-trans,poly-cis-dolichyl diphosphate + H2O = a di-trans,poly-cis-dolichyl phosphate + phosphate + H(+). It participates in protein modification; protein glycosylation. Functionally, required for efficient N-glycosylation. Necessary for maintaining optimal levels of dolichol-linked oligosaccharides. Hydrolyzes dolichyl pyrophosphate at a very high rate and dolichyl monophosphate at a much lower rate. Does not act on phosphatidate. The chain is Dolichyldiphosphatase 1 (Dolpp1) from Mus musculus (Mouse).